We begin with the raw amino-acid sequence, 461 residues long: Acetylcholine receptor subunit alpha (461 aa).

A signal peptide spans Met1–Gly24. Residues Ser25–Ile234 are Extracellular-facing. Intrachain disulfides connect Cys152–Cys166 and Cys216–Cys217. A glycan (N-linked (GlcNAc...) asparagine) is linked at Asn165. The next 3 membrane-spanning stretches (helical) occupy residues Pro235–Leu259, Met267–Val285, and Tyr301–Ile320. Residues Asn321–His432 lie on the Cytoplasmic side of the membrane. Residues Ile433–Ala451 form a helical membrane-spanning segment.

It belongs to the ligand-gated ion channel (TC 1.A.9) family. Acetylcholine receptor (TC 1.A.9.1) subfamily. Alpha-1/CHRNA1 sub-subfamily. Pentamer of two alpha chains, and one each of the beta, delta, and gamma chains.

It is found in the postsynaptic cell membrane. Its subcellular location is the cell membrane. The catalysed reaction is K(+)(in) = K(+)(out). The enzyme catalyses Na(+)(in) = Na(+)(out). Upon acetylcholine binding, the AChR responds by an extensive change in conformation that affects all subunits and leads to opening of an ion-conducting channel across the plasma membrane. This chain is Acetylcholine receptor subunit alpha (CHRNA1), found in Tetronarce californica (Pacific electric ray).